The sequence spans 63 residues: Small ribosomal subunit protein eS31 (63 aa).

Cys-31, Cys-34, Cys-50, and Cys-53 together coordinate Zn(2+).

The protein belongs to the eukaryotic ribosomal protein eS31 family. As to quaternary structure, part of the 30S ribosomal subunit. Requires Zn(2+) as cofactor.

This is Small ribosomal subunit protein eS31 (rps27ae) from Aeropyrum pernix (strain ATCC 700893 / DSM 11879 / JCM 9820 / NBRC 100138 / K1).